We begin with the raw amino-acid sequence, 435 residues long: 5-methylthioadenosine/S-adenosylhomocysteine deaminase (435 aa).

Zn(2+) contacts are provided by His-65 and His-67. Positions 94, 150, and 189 each coordinate substrate. His-216 serves as a coordination point for Zn(2+). Residues Glu-219 and Asp-304 each contribute to the substrate site. A Zn(2+)-binding site is contributed by Asp-304.

The protein belongs to the metallo-dependent hydrolases superfamily. MTA/SAH deaminase family. Zn(2+) is required as a cofactor.

The catalysed reaction is S-adenosyl-L-homocysteine + H2O + H(+) = S-inosyl-L-homocysteine + NH4(+). The enzyme catalyses S-methyl-5'-thioadenosine + H2O + H(+) = S-methyl-5'-thioinosine + NH4(+). In terms of biological role, catalyzes the deamination of 5-methylthioadenosine and S-adenosyl-L-homocysteine into 5-methylthioinosine and S-inosyl-L-homocysteine, respectively. Is also able to deaminate adenosine. The protein is 5-methylthioadenosine/S-adenosylhomocysteine deaminase of Bacillus cereus (strain B4264).